The primary structure comprises 122 residues: UPF0738 protein YjbL (122 aa).

Belongs to the UPF0738 family.

This is UPF0738 protein YjbL (yjbL) from Bacillus subtilis (strain 168).